A 410-amino-acid polypeptide reads, in one-letter code: Acetate kinase (410 aa).

Position 7 (Asn7) interacts with Mg(2+). Lys14 lines the ATP pocket. A substrate-binding site is contributed by Arg88. The Proton donor/acceptor role is filled by Asp145. ATP contacts are provided by residues 203 to 207 (HAGNG), 278 to 280 (DTR), and 326 to 330 (GIGEN). Mg(2+) is bound at residue Glu379.

The protein belongs to the acetokinase family. Homodimer. It depends on Mg(2+) as a cofactor. Requires Mn(2+) as cofactor.

It is found in the cytoplasm. The catalysed reaction is acetate + ATP = acetyl phosphate + ADP. Its pathway is metabolic intermediate biosynthesis; acetyl-CoA biosynthesis; acetyl-CoA from acetate: step 1/2. Catalyzes the formation of acetyl phosphate from acetate and ATP. Can also catalyze the reverse reaction. The sequence is that of Acetate kinase from Chlorante-Aster yellows phytoplasma.